The primary structure comprises 169 residues: uncharacterized protein (169 aa).

The Nudix hydrolase domain maps to 35–163 (LIGRGTFILL…PYCPDSLQAL (129 aa)). A Nudix box motif is present at residues 81-103 (YADSAARELEEELGIRDAVLREH). Mg(2+) is bound by residues E88 and E92.

It belongs to the Nudix hydrolase family. Requires Mg(2+) as cofactor.

This is an uncharacterized protein from Pseudomonas aeruginosa (strain ATCC 15692 / DSM 22644 / CIP 104116 / JCM 14847 / LMG 12228 / 1C / PRS 101 / PAO1).